We begin with the raw amino-acid sequence, 75 residues long: Small ribosomal subunit protein bS18 (75 aa).

The protein belongs to the bacterial ribosomal protein bS18 family. As to quaternary structure, part of the 30S ribosomal subunit. Forms a tight heterodimer with protein bS6.

In terms of biological role, binds as a heterodimer with protein bS6 to the central domain of the 16S rRNA, where it helps stabilize the platform of the 30S subunit. The polypeptide is Small ribosomal subunit protein bS18 (Thermosipho melanesiensis (strain DSM 12029 / CIP 104789 / BI429)).